The chain runs to 327 residues: Probable cell division protein WhiA (327 aa).

Residues 275–308 constitute a DNA-binding region (H-T-H motif); sequence SLEELGQLADPPMTKDAVAGRIRRLLSMADRRAR.

It belongs to the WhiA family.

Involved in cell division and chromosome segregation. The chain is Probable cell division protein WhiA from Nocardia farcinica (strain IFM 10152).